The sequence spans 684 residues: 77 kDa membrane protein (684 aa).

Residues M1–A30 form the signal peptide. 6 MAP repeats span residues G45–K154, D156–A265, K266–R374, Y375–K474, A475–N584, and S586–F684.

The protein resides in the cell membrane. Binds various plasma and ECM-proteins. This is 77 kDa membrane protein from Staphylococcus aureus (strain COL).